The following is a 1158-amino-acid chain: Putative HERC2-like protein 3 (1158 aa).

A disordered region spans residues 281-302 (PRKKRVPKKPESTDDEEKIGNE). The span at 293 to 302 (TDDEEKIGNE) shows a compositional bias: acidic residues. In terms of domain architecture, MIB/HERC2 spans 587-660 (SGPELAAMMK…NYDLKLAELP (74 aa)). The interval 662-684 (PAQPSAEDSDTEDDSEAEQTERN) is disordered. The segment covering 668 to 679 (EDSDTEDDSEAE) has biased composition (acidic residues).

This chain is Putative HERC2-like protein 3 (HERC2P3), found in Homo sapiens (Human).